A 584-amino-acid chain; its full sequence is Dihydroxyacetone kinase 1 (584 aa).

S2 is subject to N-acetylserine. Phosphoserine occurs at positions 2 and 5. Positions E7–W353 constitute a DhaK domain. Residues G51–H54, K103, and D108 contribute to the substrate site. Residue H220 is the Tele-hemiaminal-histidine intermediate of the active site. The residue at position 365 (S365) is a Phosphoserine. A DhaL domain is found at D386–S582. Residues D415–C418 and T459–S460 each bind ATP. S512 carries the post-translational modification Phosphoserine. ATP-binding positions include T514–M515 and D567–G569.

This sequence belongs to the dihydroxyacetone kinase (DAK) family.

It catalyses the reaction dihydroxyacetone + ATP = dihydroxyacetone phosphate + ADP + H(+). The enzyme catalyses D-glyceraldehyde + ATP = D-glyceraldehyde 3-phosphate + ADP + H(+). The protein operates within polyol metabolism; glycerol fermentation; glycerone phosphate from glycerol (oxidative route): step 2/2. In terms of biological role, catalyzes both the phosphorylation of dihydroxyacetone and of glyceraldehyde. The sequence is that of Dihydroxyacetone kinase 1 (DAK1) from Saccharomyces cerevisiae (strain ATCC 204508 / S288c) (Baker's yeast).